A 157-amino-acid chain; its full sequence is S-ribosylhomocysteine lyase (157 aa).

Residues His54, His58, and Cys126 each contribute to the Fe cation site.

It belongs to the LuxS family. Homodimer. Requires Fe cation as cofactor.

The catalysed reaction is S-(5-deoxy-D-ribos-5-yl)-L-homocysteine = (S)-4,5-dihydroxypentane-2,3-dione + L-homocysteine. In terms of biological role, involved in the synthesis of autoinducer 2 (AI-2) which is secreted by bacteria and is used to communicate both the cell density and the metabolic potential of the environment. The regulation of gene expression in response to changes in cell density is called quorum sensing. Catalyzes the transformation of S-ribosylhomocysteine (RHC) to homocysteine (HC) and 4,5-dihydroxy-2,3-pentadione (DPD). This chain is S-ribosylhomocysteine lyase, found in Bacillus cereus (strain G9842).